The sequence spans 276 residues: Omega-amidase NIT2-A (276 aa).

The CN hydrolase domain maps to 4-248; it reads FKLSLVQFLV…ETVLSAEIDL (245 aa). The active-site Proton acceptor is the glutamate 43. Residue lysine 112 is the Proton donor of the active site. Cysteine 153 (nucleophile) is an active-site residue.

The protein belongs to the carbon-nitrogen hydrolase superfamily. NIT1/NIT2 family. Homodimer.

Its subcellular location is the cytoplasm. The enzyme catalyses 2-oxoglutaramate + H2O = 2-oxoglutarate + NH4(+). It carries out the reaction 2-oxosuccinamate + H2O = oxaloacetate + NH4(+). Its function is as follows. Has omega-amidase activity. The role of omega-amidase is to remove potentially toxic intermediates by converting 2-oxoglutaramate and 2-oxosuccinamate to biologically useful 2-oxoglutarate and oxaloacetate, respectively. The chain is Omega-amidase NIT2-A (nit2a) from Xenopus laevis (African clawed frog).